Reading from the N-terminus, the 963-residue chain is Adhesion G protein-coupled receptor D2 (963 aa).

At 1 to 662 the chain is on the extracellular side; it reads MDAPWGAGER…EEESLLRTLS (662 aa). The disordered stretch occupies residues 18-38; sequence DRSGVSLGPPPTPQVNQGTLG. The 210-residue stretch at 116–325 folds into the Pentraxin (PTX) domain; sequence TTAVLVFDER…LPTVWVRLLC (210 aa). Cys-146 and Cys-212 are oxidised to a cystine. The N-linked (GlcNAc...) asparagine glycan is linked to Asn-271. In terms of domain architecture, GAIN-B spans 489 to 649; that stretch reads MALVASVQRL…AILLQIYEVQ (161 aa). Residues 599 to 649 are GPS; it reads PLFPPHPPSPYTGGAWATTGCSVAALYLDSTACFCNHSTSFAILLQIYEVQ. Cys-619 and Cys-633 are disulfide-bonded. Asn-634 carries N-linked (GlcNAc...) asparagine glycosylation. The helical transmembrane segment at 663 to 683 threads the bilayer; the sequence is FVGCGVSFCALTTTFLLFLVA. The Cytoplasmic portion of the chain corresponds to 684–691; it reads GVPKSERT. Residues 692–712 form a helical membrane-spanning segment; that stretch reads TVHKNLTFSLASAEGFLMTSE. The Extracellular segment spans residues 713-720; that stretch reads WAKANEVA. A helical membrane pass occupies residues 721–741; it reads CVAVTVAMHFLFLVAFSWMLV. Over 742-762 the chain is Cytoplasmic; that stretch reads EGLLLWRKVVAVSMHPGPGMR. Residues 763–783 form a helical membrane-spanning segment; that stretch reads LYHATGWGVPVGIVAVTLAML. Residues 784–800 are Extracellular-facing; that stretch reads PHDYVAPGHCWLNVHTN. Residues 801–821 form a helical membrane-spanning segment; sequence AIWAFVGPVLFVLTANTCILA. Over 822–857 the chain is Cytoplasmic; the sequence is RVVMITVSSARRRARMLSPQPCLQQQIWTQIWATVK. The chain crosses the membrane as a helical span at residues 858–878; it reads PVLVLLPVLGLTWLAGILVHL. Residues 879–880 lie on the Extracellular side of the membrane; that stretch reads SP. Residues 881 to 901 traverse the membrane as a helical segment; it reads AWAYAAVGLNSIQGLYIFLVY. Over 902–963 the chain is Cytoplasmic; that stretch reads AACNEEVRSA…TPRHPLKAPA (62 aa).

This sequence belongs to the G-protein coupled receptor 2 family. Adhesion G-protein coupled receptor (ADGR) subfamily.

The protein localises to the membrane. Its function is as follows. Orphan receptor. In Homo sapiens (Human), this protein is Adhesion G protein-coupled receptor D2 (ADGRD2).